The chain runs to 191 residues: ATP synthase subunit b (191 aa).

Residues 10–30 form a helical membrane-spanning segment; it reads FLVPGPTAIAELIVFLLILFI. The segment at 170–191 is disordered; sequence RAQRQPAASDVVGGQQREEVHR.

The protein belongs to the ATPase B chain family. As to quaternary structure, F-type ATPases have 2 components, F(1) - the catalytic core - and F(0) - the membrane proton channel. F(1) has five subunits: alpha(3), beta(3), gamma(1), delta(1), epsilon(1). F(0) has three main subunits: a(1), b(2) and c(10-14). The alpha and beta chains form an alternating ring which encloses part of the gamma chain. F(1) is attached to F(0) by a central stalk formed by the gamma and epsilon chains, while a peripheral stalk is formed by the delta and b chains.

It is found in the cell membrane. F(1)F(0) ATP synthase produces ATP from ADP in the presence of a proton or sodium gradient. F-type ATPases consist of two structural domains, F(1) containing the extramembraneous catalytic core and F(0) containing the membrane proton channel, linked together by a central stalk and a peripheral stalk. During catalysis, ATP synthesis in the catalytic domain of F(1) is coupled via a rotary mechanism of the central stalk subunits to proton translocation. Functionally, component of the F(0) channel, it forms part of the peripheral stalk, linking F(1) to F(0). The polypeptide is ATP synthase subunit b (Acidothermus cellulolyticus (strain ATCC 43068 / DSM 8971 / 11B)).